The sequence spans 122 residues: Large ribosomal subunit protein uL18 (122 aa).

Residues 1-16 are compositionally biased toward basic residues; sequence MFKKVDRKASRQKKQM. The disordered stretch occupies residues 1–29; it reads MFKKVDRKASRQKKQMSIRNKISGTPERP.

This sequence belongs to the universal ribosomal protein uL18 family. In terms of assembly, part of the 50S ribosomal subunit; part of the 5S rRNA/L5/L18/L25 subcomplex. Contacts the 5S and 23S rRNAs.

In terms of biological role, this is one of the proteins that bind and probably mediate the attachment of the 5S RNA into the large ribosomal subunit, where it forms part of the central protuberance. This is Large ribosomal subunit protein uL18 from Fusobacterium nucleatum subsp. nucleatum (strain ATCC 25586 / DSM 15643 / BCRC 10681 / CIP 101130 / JCM 8532 / KCTC 2640 / LMG 13131 / VPI 4355).